Reading from the N-terminus, the 773-residue chain is MTLYSPEFSESEQSKIDAEFSRLTENKSVYLDHAGTTLYAESQVKAAAEQLQRNVICNPHTCRLTGDFVDQVRYKVLEFFNTTSEDYHVIFTANATASLSLVAENFDFGSFGNFHFCQENHTSVLGMRERVSHAKGIYMLTEREITGCSLQNGSSKEKPTDPGRSLVTFSAQCNFSGYKIPLDAIGNIQENGLHTPGKHIWGTEGKTSNNDYYICLDAASFVATNPLDLKRYRPDFVCLSFYKIFGYPTGVGALLVSKRGAEAFRDRKFFGGGTINYAYPHTMEYQLRESFHQRYEDGTLPFLAIVGLLEGFRTLERIVPKTKELATMERISRHVHGLAKYLEDQLKQLKHPNGEPLIQLYNKAGYQDRTRQGGIVAFNVRTDSGDYVGFGEIACVAALHGILLRTGCFCNIGACQYYLGLDGDAMDAIYKRAGRICGDYFDLIDGQPTGAVRVSFGYMTTIHDVEELLKMLRSSYLATKPQQRILFIEEQAGQLPPVLQKRVQNLRPKLLQMAIFPVKSCAAFKIEGYLKSWPLTDQGLKYDREWMIVDMNGMALTQKRCTELCLIRPLIKNDVLELHFGDSCVSVPLSLEDQAADSAKCVSKVCRQPVEGLDCGERVAEWLSTNLGQDGLRLLRQSGQRNSSKDQQKLSLVNQAQFLLVNRSSVRSLQFEEPLDDTVDRFRANIIIDTGLAFEELSFKQLSIGKVQFQVQGPCQRCDMICINQKTGERSPETLTTISRLQSGRMRFGIYITRISKDTGDLQLSCGDTVLVE.

Position 243 is an N6-(pyridoxal phosphate)lysine (Lys243). Residue Cys410 is part of the active site. In terms of domain architecture, MOSC spans 632 to 773; the sequence is LRLLRQSGQR…LSCGDTVLVE (142 aa). A Phosphoserine modification is found at Ser731.

Belongs to the class-V pyridoxal-phosphate-dependent aminotransferase family. MOCOS subfamily. Requires pyridoxal 5'-phosphate as cofactor.

The catalysed reaction is Mo-molybdopterin + L-cysteine + AH2 = thio-Mo-molybdopterin + L-alanine + A + H2O. It functions in the pathway cofactor biosynthesis; molybdopterin biosynthesis. Sulfurates the molybdenum cofactor. Sulfation of molybdenum is essential for xanthine dehydrogenase (XDH) and aldehyde oxidase (ADO) enzymes in which molybdenum cofactor is liganded by 1 oxygen and 1 sulfur atom in active form. In Drosophila ananassae (Fruit fly), this protein is Molybdenum cofactor sulfurase.